Reading from the N-terminus, the 123-residue chain is MEKIKVYELRNKTDAELLKQLEDLKQEYASMRVQKVTVTSTSKLSQIGVIRKAIAKVLTVYNQRKREEARKQYTKISEMPLNMRPKLTRAKRRALTPKQLHLKTIKQRKKCENFPKRKYALLV.

The protein belongs to the universal ribosomal protein uL29 family.

The sequence is that of Large ribosomal subunit protein uL29 (RPL35) from Babesia bovis.